Here is a 329-residue protein sequence, read N- to C-terminus: Helicase VP6-A (329 aa).

2 disordered regions span residues 28–130 (NLVD…TNGG) and 189–232 (DLRR…SEEP). 3 stretches are compositionally biased toward basic and acidic residues: residues 36–58 (EGGKEDKTEPKEESKAEGSKDGE), 65–83 (GQKEEGGKETKDADVDRRI), and 96–109 (SGERANENANRGDG). K110 contacts ATP. Positions 110 to 129 (KVGGGGGDADAGVGATGTNG) are enriched in gly residues. Basic and acidic residues-rich tracts occupy residues 189–207 (DLRRKEKNGTHAKAVERGG) and 215–232 (HGDAQREGVEEEKTSEEP).

Belongs to the reoviruses VP6 family. Homohexamer.

Its subcellular location is the virion. The catalysed reaction is ATP + H2O = ADP + phosphate + H(+). Functionally, ATP dependent RNA helicase essential for RNA packaging and viral transcription. Possesses ss- and dsRNA-binding capacity. The polypeptide is Helicase VP6-A (Segment-9) (Bluetongue virus 10 (isolate USA) (BTV 10)).